A 605-amino-acid polypeptide reads, in one-letter code: Leucine-rich repeat-containing protein 40 (605 aa).

The segment at 1 to 26 is disordered; that stretch reads MSRFRRGGKAPDPLSGFRAPKEQEPA. 19 LRR repeats span residues 83–104, 106–127, 129–151, 152–173, 175–196, 198–219, 221–242, 244–265, 266–287, 290–311, 313–335, 336–357, 429–450, 453–475, 476–497, 499–520, 522–543, 546–567, and 569–590; these read DLTK…ISLL, ALVV…IKEL, NLQK…QHLQ, NLKS…IGHL, ILEE…VGQL, GLVK…IGKM, NLKQ…VAGM, SLEQ…PFLT, KLKE…HLQN, SLSV…ISLL, GLER…GSLP, NLKS…ILNK, FITT…IVEM, SVCD…CMLL, KLTH…MEAM, RLQS…LYRI, TLET…QLIK, KLST…LGNC, and SLRA…ILAK.

This Xenopus tropicalis (Western clawed frog) protein is Leucine-rich repeat-containing protein 40 (lrrc40).